Consider the following 763-residue polypeptide: Hormone-sensitive lipase (763 aa).

Positions 350–352 match the Involved in the stabilization of the negatively charged intermediate by the formation of the oxyanion hole motif; the sequence is HGG. The active site involves S424. The residue at position 552 (S552) is a Phosphoserine. S554 carries the phosphoserine; by AMPK modification. S595, S627, and S649 each carry phosphoserine. A compositionally biased stretch (basic and acidic residues) spans 616-627; the sequence is AREEAEAKEGLS. The segment at 616–652 is disordered; it reads AREEAEAKEGLSAKDGSSRVSNAFPEGFHPRRTSQGA. Catalysis depends on residues D692 and H722.

This sequence belongs to the 'GDXG' lipolytic enzyme family. In terms of assembly, monomer and homodimer. Interacts with CAVIN1 in the adipocyte cytoplasm. Interacts with PLIN5. In terms of processing, phosphorylation by AMPK reduces its translocation towards the lipid droplets.

The protein resides in the cell membrane. The protein localises to the membrane. Its subcellular location is the caveola. It is found in the cytoplasm. It localises to the cytosol. The protein resides in the lipid droplet. It carries out the reaction a diacylglycerol + H2O = a monoacylglycerol + a fatty acid + H(+). It catalyses the reaction a triacylglycerol + H2O = a diacylglycerol + a fatty acid + H(+). The catalysed reaction is a monoacylglycerol + H2O = glycerol + a fatty acid + H(+). The enzyme catalyses Hydrolyzes glycerol monoesters of long-chain fatty acids.. It carries out the reaction 1,2-di-(9Z-octadecenoyl)-glycerol + (9Z)-octadecenoate + H(+) = 1,2,3-tri-(9Z-octadecenoyl)-glycerol + H2O. It catalyses the reaction 2,3-di-(9Z)-octadecenoyl-sn-glycerol + H2O = 2-(9Z-octadecenoyl)-glycerol + (9Z)-octadecenoate + H(+). The catalysed reaction is cholesteryl (9Z-octadecenoate) + H2O = cholesterol + (9Z)-octadecenoate + H(+). The enzyme catalyses 1,2,3-tri-(9Z-octadecenoyl)-glycerol + H2O = di-(9Z)-octadecenoylglycerol + (9Z)-octadecenoate + H(+). It carries out the reaction all-trans-retinyl hexadecanoate + H2O = all-trans-retinol + hexadecanoate + H(+). It catalyses the reaction 1,2-di-(9Z-octadecenoyl)-glycerol + H2O = (9Z-octadecenoyl)-glycerol + (9Z)-octadecenoate + H(+). The catalysed reaction is 2-(5Z,8Z,11Z,14Z-eicosatetraenoyl)-glycerol + H2O = glycerol + (5Z,8Z,11Z,14Z)-eicosatetraenoate + H(+). The enzyme catalyses 1-(9Z-octadecenoyl)-glycerol + H2O = glycerol + (9Z)-octadecenoate + H(+). It carries out the reaction 2-(9Z-octadecenoyl)-glycerol + H2O = glycerol + (9Z)-octadecenoate + H(+). It catalyses the reaction 1-O-hexadecyl-2-acetyl-sn-glycerol + H2O = 1-O-hexadecyl-sn-glycerol + acetate + H(+). The catalysed reaction is 1,2-di-(9Z-octadecenoyl)-sn-glycerol + H2O = (9Z-octadecenoyl)-glycerol + (9Z)-octadecenoate + H(+). The enzyme catalyses 1,3-di-(9Z-octadecenoyl)-glycerol + H2O = 1-(9Z-octadecenoyl)-glycerol + (9Z)-octadecenoate + H(+). It carries out the reaction 1,2-di-(9Z-octadecenoyl)-glycerol + H2O = 2-(9Z-octadecenoyl)-glycerol + (9Z)-octadecenoate + H(+). It participates in glycerolipid metabolism; triacylglycerol degradation. Functionally, lipase with broad substrate specificity, catalyzing the hydrolysis of triacylglycerols (TAGs), diacylglycerols (DAGs), monoacylglycerols (MAGs), cholesteryl esters and retinyl esters. Shows a preferential hydrolysis of DAGs over TAGs and MAGs. Preferentially hydrolyzes fatty acid (FA) esters at the sn-3 position of the glycerol backbone in DAGs and FA esters at the sn-1 and sn-2 positions of the glycerol backbone in TAGs. Catalyzes the hydrolysis of 2-arachidonoylglycerol, an endocannabinoid and of 2-acetyl monoalkylglycerol ether, the penultimate precursor of the pathway for de novo synthesis of platelet-activating factor. In adipose tissue and heart, it primarily hydrolyzes stored triglycerides to free fatty acids, while in steroidogenic tissues, it principally converts cholesteryl esters to free cholesterol for steroid hormone production. The protein is Hormone-sensitive lipase (LIPE) of Ictidomys tridecemlineatus (Thirteen-lined ground squirrel).